We begin with the raw amino-acid sequence, 156 residues long: Ribosomal RNA large subunit methyltransferase H (156 aa).

Residues L73, G104, and 123–128 (LSPLTL) contribute to the S-adenosyl-L-methionine site.

It belongs to the RNA methyltransferase RlmH family. Homodimer.

The protein localises to the cytoplasm. The enzyme catalyses pseudouridine(1915) in 23S rRNA + S-adenosyl-L-methionine = N(3)-methylpseudouridine(1915) in 23S rRNA + S-adenosyl-L-homocysteine + H(+). Functionally, specifically methylates the pseudouridine at position 1915 (m3Psi1915) in 23S rRNA. This Aliivibrio fischeri (strain ATCC 700601 / ES114) (Vibrio fischeri) protein is Ribosomal RNA large subunit methyltransferase H.